The chain runs to 426 residues: Tol-Pal system protein TolB (426 aa).

The first 25 residues, 1-25 (MNILLSRFRLLLAAALAALSWGAQA), serve as a signal peptide directing secretion.

This sequence belongs to the TolB family. In terms of assembly, the Tol-Pal system is composed of five core proteins: the inner membrane proteins TolA, TolQ and TolR, the periplasmic protein TolB and the outer membrane protein Pal. They form a network linking the inner and outer membranes and the peptidoglycan layer.

The protein localises to the periplasm. Its function is as follows. Part of the Tol-Pal system, which plays a role in outer membrane invagination during cell division and is important for maintaining outer membrane integrity. The chain is Tol-Pal system protein TolB from Aromatoleum aromaticum (strain DSM 19018 / LMG 30748 / EbN1) (Azoarcus sp. (strain EbN1)).